The following is a 492-amino-acid chain: Stromelysin-3 (492 aa).

Positions 1-35 (MARAACLLRAISRVLLLPLPLLLLLLLLLPSPLMA) are cleaved as a signal peptide. A propeptide spans 36–101 (RARPPESHRH…VLNARNRQKR (66 aa)) (activation peptide). A Cysteine switch motif is present at residues 82 to 89 (LRCGVPDL). Zn(2+) contacts are provided by C84, H168, and D170. D175, G176, G178, and I180 together coordinate Ca(2+). Zn(2+) contacts are provided by H183, H196, and H219. Residue E220 is part of the active site. Positions 223 and 229 each coordinate Zn(2+). Hemopexin repeat units follow at residues 295–343 (PDVC…WQGL), 344–386 (PSPV…KLGL), 388–436 (GSPV…WRGV), and 437–484 (PSEI…FFDC). A disulfide bond links C298 and C484.

Belongs to the peptidase M10A family. The cofactor is Ca(2+). It depends on Zn(2+) as a cofactor. The precursor is cleaved by a furin endopeptidase. As to expression, specifically expressed in the mammary gland during apoptosis.

It is found in the secreted. The protein localises to the extracellular space. It localises to the extracellular matrix. May play an important role in the progression of epithelial malignancies. This is Stromelysin-3 (Mmp11) from Mus musculus (Mouse).